The sequence spans 185 residues: Ribonuclease M5 (185 aa).

The Toprim domain occupies 3–84 (KEVIVVEGRD…KHARISQSEG (82 aa)). The Mg(2+) site is built by Glu9, Asp55, and Asp57.

The protein belongs to the ribonuclease M5 family. It depends on Mg(2+) as a cofactor.

The protein localises to the cytoplasm. The enzyme catalyses Endonucleolytic cleavage of RNA, removing 21 and 42 nucleotides, respectively, from the 5'- and 3'-termini of a 5S-rRNA precursor.. Functionally, required for correct processing of both the 5' and 3' ends of 5S rRNA precursor. Cleaves both sides of a double-stranded region yielding mature 5S rRNA in one step. In Clostridium acetobutylicum (strain ATCC 824 / DSM 792 / JCM 1419 / IAM 19013 / LMG 5710 / NBRC 13948 / NRRL B-527 / VKM B-1787 / 2291 / W), this protein is Ribonuclease M5.